A 158-amino-acid chain; its full sequence is SsrA-binding protein (158 aa).

This sequence belongs to the SmpB family.

It is found in the cytoplasm. Functionally, required for rescue of stalled ribosomes mediated by trans-translation. Binds to transfer-messenger RNA (tmRNA), required for stable association of tmRNA with ribosomes. tmRNA and SmpB together mimic tRNA shape, replacing the anticodon stem-loop with SmpB. tmRNA is encoded by the ssrA gene; the 2 termini fold to resemble tRNA(Ala) and it encodes a 'tag peptide', a short internal open reading frame. During trans-translation Ala-aminoacylated tmRNA acts like a tRNA, entering the A-site of stalled ribosomes, displacing the stalled mRNA. The ribosome then switches to translate the ORF on the tmRNA; the nascent peptide is terminated with the 'tag peptide' encoded by the tmRNA and targeted for degradation. The ribosome is freed to recommence translation, which seems to be the essential function of trans-translation. This Buchnera aphidicola subsp. Baizongia pistaciae (strain Bp) protein is SsrA-binding protein.